A 636-amino-acid polypeptide reads, in one-letter code: Putative cysteine-rich receptor-like protein kinase 33 (636 aa).

Positions 1 to 25 are cleaved as a signal peptide; that stretch reads MRKTKKISFLIFWVVLISIIGAISS. 2 consecutive Gnk2-homologous domains span residues 26–128 and 138–245; these read QQCN…NSSF and YMEH…LYPF. Over 26–266 the chain is Extracellular; the sequence is QQCNETGYFE…PGSKRNISVG (241 aa). N-linked (GlcNAc...) asparagine glycosylation is found at Asn29, Asn63, Asn105, Asn125, Asn149, Asn173, Asn185, Asn188, Asn250, and Asn262. Residues 267–287 form a helical membrane-spanning segment; sequence FFVAIVVATGVVISVLSTLVV. Residues 288–636 lie on the Cytoplasmic side of the membrane; it reads VLVCRKRKTD…DSLIDDLVPR (349 aa). A Protein kinase domain is found at 321–600; it reads FSKCNMLGQG…MMLTSNSITL (280 aa). Residues 327–335 and Lys349 contribute to the ATP site; that span reads LGQGGFGEV. Residue Tyr394 is modified to Phosphotyrosine. Asp446 serves as the catalytic Proton acceptor. Residue Ser450 is modified to Phosphoserine. Thr486 is subject to Phosphothreonine. Residue Tyr494 is modified to Phosphotyrosine.

This sequence belongs to the protein kinase superfamily. Ser/Thr protein kinase family. CRK subfamily.

The protein localises to the membrane. The enzyme catalyses L-seryl-[protein] + ATP = O-phospho-L-seryl-[protein] + ADP + H(+). It carries out the reaction L-threonyl-[protein] + ATP = O-phospho-L-threonyl-[protein] + ADP + H(+). The protein is Putative cysteine-rich receptor-like protein kinase 33 (CRK33) of Arabidopsis thaliana (Mouse-ear cress).